The chain runs to 736 residues: Catalase-peroxidase (736 aa).

A cross-link (tryptophyl-tyrosyl-methioninium (Trp-Tyr) (with M-249)) is located at residues 100–223 (WHSAGTYRIG…LAAVQMGLIY (124 aa)). Residue His-101 is the Proton acceptor of the active site. Residues 223–249 (YVNPEGPDGKPDPVAAARDIRETFRRM) constitute a cross-link (tryptophyl-tyrosyl-methioninium (Tyr-Met) (with W-100)). His-264 contacts heme b.

The protein belongs to the peroxidase family. Peroxidase/catalase subfamily. In terms of assembly, homodimer or homotetramer. Heme b is required as a cofactor. Formation of the three residue Trp-Tyr-Met cross-link is important for the catalase, but not the peroxidase activity of the enzyme.

It catalyses the reaction H2O2 + AH2 = A + 2 H2O. The catalysed reaction is 2 H2O2 = O2 + 2 H2O. Its function is as follows. Bifunctional enzyme with both catalase and broad-spectrum peroxidase activity. The chain is Catalase-peroxidase from Geobacillus kaustophilus (strain HTA426).